The primary structure comprises 253 residues: Phosphate import ATP-binding protein PstB (253 aa).

In terms of domain architecture, ABC transporter spans 7–248; the sequence is IDARDVNFWY…PEKEATQNYI (242 aa). 39–46 serves as a coordination point for ATP; that stretch reads GPSGCGKS.

The protein belongs to the ABC transporter superfamily. Phosphate importer (TC 3.A.1.7) family. In terms of assembly, the complex is composed of two ATP-binding proteins (PstB), two transmembrane proteins (PstC and PstA) and a solute-binding protein (PstS).

It localises to the cell inner membrane. It carries out the reaction phosphate(out) + ATP + H2O = ADP + 2 phosphate(in) + H(+). Its function is as follows. Part of the ABC transporter complex PstSACB involved in phosphate import. Responsible for energy coupling to the transport system. The sequence is that of Phosphate import ATP-binding protein PstB from Bacteroides fragilis (strain ATCC 25285 / DSM 2151 / CCUG 4856 / JCM 11019 / LMG 10263 / NCTC 9343 / Onslow / VPI 2553 / EN-2).